Consider the following 57-residue polypeptide: Neurotoxin Oh9-1 (57 aa).

4 disulfides stabilise this stretch: C3-C19, C12-C37, C41-C49, and C50-C55.

It belongs to the three-finger toxin family. Short-chain subfamily. As to expression, expressed by the venom gland.

The protein localises to the secreted. Its function is as follows. This toxin binds and inhibits rat muscle adult alpha-1-beta-1-delta-epsilon/CHRNA1-CHRNB1-CHRND-CHRNE (IC(50)=3.1 uM) and fetal alpha-1-beta-1-gamma-delta/CHRNA1-CHRNB1-CHRNG-CHRND (IC(50)=5.6 uM) nicotinic acetylcholine receptors (nAChR). Shows a very low inhibition on rat neuronal alpha-3-beta-2/CHRNA3-CHRNB2 nAChR (IC(50)=50.2 uM) nAChR. Binds to the acetylcholine-binding pocket and acts as a competitive antagonist. Does not inhibit human glycine receptor (homopentamer composed of alpha-1 subunits, GLRA1), but seems to potentiate it (about 2-fold increased activity). In Ophiophagus hannah (King cobra), this protein is Neurotoxin Oh9-1.